We begin with the raw amino-acid sequence, 111 residues long: ATP-dependent Clp protease adapter protein ClpS (111 aa).

This sequence belongs to the ClpS family. As to quaternary structure, binds to the N-terminal domain of the chaperone ClpA.

In terms of biological role, involved in the modulation of the specificity of the ClpAP-mediated ATP-dependent protein degradation. The chain is ATP-dependent Clp protease adapter protein ClpS from Leptospira interrogans serogroup Icterohaemorrhagiae serovar copenhageni (strain Fiocruz L1-130).